Consider the following 192-residue polypeptide: Pyridoxal 5'-phosphate synthase subunit PdxT (192 aa).

An L-glutamine-binding site is contributed by 53-55 (GES). The active-site Nucleophile is cysteine 82. L-glutamine is bound by residues arginine 108 and 134-135 (IR). Residues histidine 170 and glutamate 172 each act as charge relay system in the active site.

The protein belongs to the glutaminase PdxT/SNO family. As to quaternary structure, in the presence of PdxS, forms a dodecamer of heterodimers. Only shows activity in the heterodimer.

The catalysed reaction is aldehydo-D-ribose 5-phosphate + D-glyceraldehyde 3-phosphate + L-glutamine = pyridoxal 5'-phosphate + L-glutamate + phosphate + 3 H2O + H(+). It carries out the reaction L-glutamine + H2O = L-glutamate + NH4(+). The protein operates within cofactor biosynthesis; pyridoxal 5'-phosphate biosynthesis. In terms of biological role, catalyzes the hydrolysis of glutamine to glutamate and ammonia as part of the biosynthesis of pyridoxal 5'-phosphate. The resulting ammonia molecule is channeled to the active site of PdxS. This is Pyridoxal 5'-phosphate synthase subunit PdxT from Methanothermobacter thermautotrophicus (strain ATCC 29096 / DSM 1053 / JCM 10044 / NBRC 100330 / Delta H) (Methanobacterium thermoautotrophicum).